The sequence spans 367 residues: Ferrochelatase (367 aa).

Fe cation contacts are provided by His226 and Glu307.

The protein belongs to the ferrochelatase family.

The protein resides in the cytoplasm. It catalyses the reaction heme b + 2 H(+) = protoporphyrin IX + Fe(2+). The protein operates within porphyrin-containing compound metabolism; protoheme biosynthesis; protoheme from protoporphyrin-IX: step 1/1. Functionally, catalyzes the ferrous insertion into protoporphyrin IX. The protein is Ferrochelatase of Burkholderia mallei (strain NCTC 10247).